The primary structure comprises 1118 residues: Sodium-driven chloride bicarbonate exchanger (1118 aa).

Disordered stretches follow at residues 1–23 (MEIK…EEAV) and 58–97 (GRKS…TPSQ). At 1 to 509 (MEIKDQGAQM…DFRDAFSLQC (509 aa)) the chain is on the cytoplasmic side. Over residues 59–76 (RKSHRRHRHRGHKHRKRD) the composition is skewed to basic residues. The span at 77–90 (RERDSGLEDGRESP) shows a compositional bias: basic and acidic residues. Serine 89 carries the phosphoserine modification. Position 94 is a phosphothreonine (threonine 94). The Zn(2+) site is built by histidine 221 and histidine 223. Disordered stretches follow at residues 269–310 (AENK…KGPP) and 457–476 (NGTA…GPEL). Position 276 is a phosphoserine (serine 276). The helical transmembrane segment at 510 to 530 (LASFLFLYCACMSPVITFGGL) threads the bilayer. Topologically, residues 531–538 (LGEATEGR) are extracellular. The chain crosses the membrane as a helical span at residues 539 to 559 (ISAIESLFGASMTGIAYSLFG). Over 560-562 (GQP) the chain is Cytoplasmic. A helical membrane pass occupies residues 563–583 (LTILGSTGPVLVFEKILFKFC). Residues 584–596 (KEYGLSYLSLRAS) lie on the Extracellular side of the membrane. Residues 597–617 (IGLWTATLCIILVATDASSLV) traverse the membrane as a helical segment. Topologically, residues 618-626 (CYITRFTEE) are cytoplasmic. The chain crosses the membrane as a helical span at residues 627–647 (AFASLICIIFIYEALEKLFEL). Residues 648–720 (SETYPINMHN…VGRACGHGHP (73 aa)) are Extracellular-facing. N-linked (GlcNAc...) asparagine glycosylation is found at asparagine 677, asparagine 687, and asparagine 697. A helical transmembrane segment spans residues 721–741 (YVPDVLFWSVILFFSTVTMSA). Residues 742-762 (TLKQFKTSRYFPTKVRSIVSD) lie on the Cytoplasmic side of the membrane. The helical transmembrane segment at 763 to 783 (FAVFLTILCMVLIDYAIGIPS) threads the bilayer. Over 784 to 809 (PKLQVPSVFKPTRDDRGWFVTPLGPN) the chain is Extracellular. The chain crosses the membrane as a helical span at residues 810–830 (PWWTIIAAIIPALLCTILIFM). At 831–855 (DQQITAVIINRKEHKLKKGCGYHLD) the chain is on the cytoplasmic side. The helical transmembrane segment at 856–876 (LLMVAVMLGVCSIMGLPWFVA) threads the bilayer. The Extracellular portion of the chain corresponds to 877 to 912 (ATVLSITHVNSLKLESECSAPGEQPKFLGIREQRVT). A helical transmembrane segment spans residues 913-933 (GLMIFILMGSSVFMTSILKFI). The Cytoplasmic portion of the chain corresponds to 934–935 (PM). Residues 936–956 (PVLYGVFLYMGASSLKGIQLF) form a helical membrane-spanning segment. Residues 957-998 (DRIKLFWMPAKHQPDFIYLRHVPLRKVHLFTVIQMSCLGLLW) lie on the Extracellular side of the membrane. Residues 999–1019 (IIKVSRAAIVFPMMVLALVFV) traverse the membrane as a helical segment. Residues 1020–1118 (RKLMDFLFTK…SRFPSKSSPS (99 aa)) are Cytoplasmic-facing. Phosphoserine occurs at positions 1057 and 1085.

This sequence belongs to the anion exchanger (TC 2.A.31) family. N-glycosylated. In the brain, detected in cerebral cortex, subcortex, cerebellum, hippocampus and medulla (at protein level). In the cerebrum, expressed at high levels throughout the cortex, at lower levels in striatum and not detectable in the corpus callosum (at protein level). In the cerebellum, detected at high levels in the molecular layer but at very low levels in the granular layer (at protein level). In the central nervous system, detected in neurons in the olfactory bulb, cortex and cerebellum (at protein level). Within the hippocampus, abundantly expressed in CA3 pyramidal cells (at protein level). Strongly expressed in the retina with high levels in bipolar and amacrine cells (at protein level). Expressed in the epithelial cells of the choroid plexus. During embryonic development, expressed in neurons of the central nervous system. Also expressed in the peripheral nervous system and in non-neuronal tissues such as the dura and some epithelia including the acid-secreting epithelium of the stomach and the duodenal epithelium. In the embryonic retina, expression is restricted to the neuronal cell layer and the retinal pigment epithelium. As to expression, expressed at high levels in brain and at low levels in the pituitary, testis, kidney and ileum. Also expressed in pancreatic islets.

The protein localises to the basolateral cell membrane. It is found in the apical cell membrane. It localises to the cell projection. Its subcellular location is the dendrite. The protein resides in the axon. The protein localises to the perikaryon. It is found in the presynapse. It localises to the postsynapse. The catalysed reaction is 2 hydrogencarbonate(out) + chloride(in) + Na(+)(out) = 2 hydrogencarbonate(in) + chloride(out) + Na(+)(in). With respect to regulation, zinc-binding negatively regulates its activity. Functionally, sodium/bicarbonate cotransporter which plays an important role in regulating intracellular pH. Has been shown to act as a sodium/bicarbonate cotransporter in exchange for intracellular chloride. Has also been shown to act as a sodium/biocarbonate cotransporter which is not responsible for net efflux of chloride, with the observed chloride efflux being due to chloride self-exchange. Controls neuronal pH and may contribute to the secretion of cerebrospinal fluid. Acting on presynaptic intracellular pH, it promotes GABA release, reduces the excitability of CA1 pyramidal neurons, and modulates short-term synaptic plasticity. Required in retinal cells to maintain normal pH which is necessary for normal vision. In the kidney, likely to mediate bicarbonate reclamation in the apical membrane of the proximal tubules. Its function is as follows. Sodium/bicarbonate cotransporter which mediates cotransport of sodium and bicarbonate in association with an efflux of intracellular chloride. The chain is Sodium-driven chloride bicarbonate exchanger from Mus musculus (Mouse).